Consider the following 458-residue polypeptide: ATP synthase subunit beta (458 aa).

148–155 lines the ATP pocket; sequence GGAGVGKT.

Belongs to the ATPase alpha/beta chains family. In terms of assembly, F-type ATPases have 2 components, CF(1) - the catalytic core - and CF(0) - the membrane proton channel. CF(1) has five subunits: alpha(3), beta(3), gamma(1), delta(1), epsilon(1). CF(0) has three main subunits: a(1), b(2) and c(9-12). The alpha and beta chains form an alternating ring which encloses part of the gamma chain. CF(1) is attached to CF(0) by a central stalk formed by the gamma and epsilon chains, while a peripheral stalk is formed by the delta and b chains.

Its subcellular location is the cell inner membrane. It catalyses the reaction ATP + H2O + 4 H(+)(in) = ADP + phosphate + 5 H(+)(out). Produces ATP from ADP in the presence of a proton gradient across the membrane. The catalytic sites are hosted primarily by the beta subunits. The chain is ATP synthase subunit beta from Alkalilimnicola ehrlichii (strain ATCC BAA-1101 / DSM 17681 / MLHE-1).